The primary structure comprises 416 residues: Lipase (416 aa).

Residues Met-1–Ala-28 form the signal peptide. Ser-141 serves as the catalytic Nucleophile. Gly-314 is a binding site for Ca(2+). Catalysis depends on Asp-345, which acts as the Charge relay system. Asp-385 lines the Ca(2+) pocket. His-386 acts as the Charge relay system in catalysis. The Ca(2+) site is built by Glu-388, Asp-393, and Pro-394.

Belongs to the AB hydrolase superfamily. Homodimer.

It is found in the secreted. It catalyses the reaction a triacylglycerol + H2O = a diacylglycerol + a fatty acid + H(+). With respect to regulation, activity is inhibited by zinc and iron ions, and activated in vitro in 25% v/v DMSO and acetone. Its function is as follows. Triacylglycerol hydrolase that shows hydrolysis preference towards some of the natural oils such as olive, sunflower and corn oils. This Bacillus sp protein is Lipase.